Consider the following 478-residue polypeptide: Violaxanthin de-epoxidase, chloroplastic (478 aa).

Residues 388–453 (LVERLEKKVE…RELSKEEMDV (66 aa)) are a coiled coil.

This sequence belongs to the calycin superfamily. Lipocalin family.

Its subcellular location is the plastid. The protein localises to the chloroplast thylakoid membrane. It carries out the reaction all-trans-violaxanthin + 2 L-ascorbate = all-trans-zeaxanthin + 2 L-dehydroascorbate + 2 H2O. Part of the xanthophyll (or violaxanthin) cycle for controlling the concentration of zeaxanthin in chloroplasts. Catalyzes the two-step mono de-epoxidation reaction. Stereospecific for all-trans xanthophylls. Zeaxanthin induces the dissipation of excitation energy in the chlorophyll of the light-harvesting protein complex of photosystem II. This Nicotiana tabacum (Common tobacco) protein is Violaxanthin de-epoxidase, chloroplastic (VDE1).